The sequence spans 191 residues: Large ribosomal subunit protein uL6 (191 aa).

Belongs to the universal ribosomal protein uL6 family. In terms of assembly, component of the large ribosomal subunit. Mature ribosomes consist of a small (40S) and a large (60S) subunit. The 40S subunit contains about 32 different proteins and 1 molecule of RNA (18S). The 60S subunit contains 45 different proteins and 3 molecules of RNA (25S, 5.8S and 5S).

It is found in the cytoplasm. Component of the ribosome, a large ribonucleoprotein complex responsible for the synthesis of proteins in the cell. The small ribosomal subunit (SSU) binds messenger RNAs (mRNAs) and translates the encoded message by selecting cognate aminoacyl-transfer RNA (tRNA) molecules. The large subunit (LSU) contains the ribosomal catalytic site termed the peptidyl transferase center (PTC), which catalyzes the formation of peptide bonds, thereby polymerizing the amino acids delivered by tRNAs into a polypeptide chain. The nascent polypeptides leave the ribosome through a tunnel in the LSU and interact with protein factors that function in enzymatic processing, targeting, and the membrane insertion of nascent chains at the exit of the ribosomal tunnel. The polypeptide is Large ribosomal subunit protein uL6 (Candida albicans (strain SC5314 / ATCC MYA-2876) (Yeast)).